The chain runs to 467 residues: Probable glutamate decarboxylase gamma (467 aa).

Lys278 carries the N6-(pyridoxal phosphate)lysine modification.

Belongs to the group II decarboxylase family. Requires pyridoxal 5'-phosphate as cofactor.

The enzyme catalyses L-glutamate + H(+) = 4-aminobutanoate + CO2. This chain is Probable glutamate decarboxylase gamma, found in Listeria monocytogenes serovar 1/2a (strain ATCC BAA-679 / EGD-e).